Reading from the N-terminus, the 860-residue chain is Probable beta-glucosidase A (860 aa).

Residues 1-19 (MRFTSIEAVALTAVSLASA) form the signal peptide. Residues Asn61, Asn211, and Asn252 are each glycosylated (N-linked (GlcNAc...) asparagine). Residue Asp280 is part of the active site. N-linked (GlcNAc...) asparagine glycans are attached at residues Asn315, Asn322, Asn354, Asn387, Asn442, Asn523, Asn542, Asn564, Asn658, Asn690, and Asn712.

The protein belongs to the glycosyl hydrolase 3 family.

The protein localises to the secreted. The enzyme catalyses Hydrolysis of terminal, non-reducing beta-D-glucosyl residues with release of beta-D-glucose.. Its pathway is glycan metabolism; cellulose degradation. Functionally, beta-glucosidases are one of a number of cellulolytic enzymes involved in the degradation of cellulosic biomass. Catalyzes the last step releasing glucose from the inhibitory cellobiose. This chain is Probable beta-glucosidase A (bglA), found in Aspergillus niger (strain ATCC MYA-4892 / CBS 513.88 / FGSC A1513).